The following is a 324-amino-acid chain: Endochitinase 1 (324 aa).

The signal sequence occupies residues 1-22 (MSFLQALSIFLLLLLYVVVGSA). The Chitin-binding type-1 domain occupies 23-64 (EQCGRQAGGALCPGGLCCSQFGWCGSTADYCTVPGCQSQCSG). Disulfide bonds link C25–C40, C34–C46, C39–C53, C58–C62, C95–C158, C170–C178, and C277–C309. Residue E139 is the Proton donor of the active site. Residues 318–324 (GVSVDSM) constitute a propeptide, removed in mature form.

Belongs to the glycosyl hydrolase 19 family. Chitinase class I subfamily.

It catalyses the reaction Random endo-hydrolysis of N-acetyl-beta-D-glucosaminide (1-&gt;4)-beta-linkages in chitin and chitodextrins.. Defense against chitin-containing fungal pathogens. This chain is Endochitinase 1, found in Gossypium hirsutum (Upland cotton).